The chain runs to 187 residues: Meiotically up-regulated gene 155 protein (187 aa).

The interval 1–24 (MRPTSGCSKDDTIQKQNRRHNTVD) is disordered. 2 helical membrane passes run 83–105 (IISYHFISFHTIVVLLLLPPFSH) and 163–183 (VMLTKPKQFLFLLEFITLFIF).

The protein localises to the cytoplasm. It localises to the nucleus membrane. Its function is as follows. Has a role in meiosis. The protein is Meiotically up-regulated gene 155 protein (mug155) of Schizosaccharomyces pombe (strain 972 / ATCC 24843) (Fission yeast).